Consider the following 323-residue polypeptide: tRNA U34 carboxymethyltransferase (323 aa).

Carboxy-S-adenosyl-L-methionine is bound by residues Lys-91, Trp-105, Lys-110, Gly-130, 180–181, Met-196, Tyr-200, and Arg-315; that span reads VE.

It belongs to the class I-like SAM-binding methyltransferase superfamily. CmoB family. In terms of assembly, homotetramer.

It carries out the reaction carboxy-S-adenosyl-L-methionine + 5-hydroxyuridine(34) in tRNA = 5-carboxymethoxyuridine(34) in tRNA + S-adenosyl-L-homocysteine + H(+). Functionally, catalyzes carboxymethyl transfer from carboxy-S-adenosyl-L-methionine (Cx-SAM) to 5-hydroxyuridine (ho5U) to form 5-carboxymethoxyuridine (cmo5U) at position 34 in tRNAs. This is tRNA U34 carboxymethyltransferase from Trichlorobacter lovleyi (strain ATCC BAA-1151 / DSM 17278 / SZ) (Geobacter lovleyi).